We begin with the raw amino-acid sequence, 276 residues long: NH(3)-dependent NAD(+) synthetase (276 aa).

Position 39 to 46 (39 to 46 (GLSGGVDS)) interacts with ATP. Residue D45 coordinates Mg(2+). R123 serves as a coordination point for deamido-NAD(+). An ATP-binding site is contributed by T143. Position 148 (E148) interacts with Mg(2+). Deamido-NAD(+) is bound by residues K156 and D163. 2 residues coordinate ATP: K172 and S194. 254 to 255 (HK) serves as a coordination point for deamido-NAD(+).

This sequence belongs to the NAD synthetase family. Homodimer.

It carries out the reaction deamido-NAD(+) + NH4(+) + ATP = AMP + diphosphate + NAD(+) + H(+). It functions in the pathway cofactor biosynthesis; NAD(+) biosynthesis; NAD(+) from deamido-NAD(+) (ammonia route): step 1/1. Functionally, catalyzes the ATP-dependent amidation of deamido-NAD to form NAD. Uses ammonia as a nitrogen source. The protein is NH(3)-dependent NAD(+) synthetase of Hyperthermus butylicus (strain DSM 5456 / JCM 9403 / PLM1-5).